The sequence spans 155 residues: MPKLYEGHLIGQGLRFGIVIGRFNEFITNKLLSGALDALNRHGVADQDIEVAWVPGAFEIPMVARKMASAMKYDAVICLGAVIRGATPHFDYVAGEVAKGVARIGLESGVPTIFGVITADSIEQAIERAGAKAGNKGWDAAVTAIEMANLMKILK.

Residues phenylalanine 23, 57-59 (AFE), and 81-83 (AVI) contribute to the 5-amino-6-(D-ribitylamino)uracil site. 86 to 87 (AT) contacts (2S)-2-hydroxy-3-oxobutyl phosphate. Catalysis depends on histidine 89, which acts as the Proton donor. Phenylalanine 114 provides a ligand contact to 5-amino-6-(D-ribitylamino)uracil. Arginine 128 is a (2S)-2-hydroxy-3-oxobutyl phosphate binding site.

The protein belongs to the DMRL synthase family.

The catalysed reaction is (2S)-2-hydroxy-3-oxobutyl phosphate + 5-amino-6-(D-ribitylamino)uracil = 6,7-dimethyl-8-(1-D-ribityl)lumazine + phosphate + 2 H2O + H(+). Its pathway is cofactor biosynthesis; riboflavin biosynthesis; riboflavin from 2-hydroxy-3-oxobutyl phosphate and 5-amino-6-(D-ribitylamino)uracil: step 1/2. Catalyzes the formation of 6,7-dimethyl-8-ribityllumazine by condensation of 5-amino-6-(D-ribitylamino)uracil with 3,4-dihydroxy-2-butanone 4-phosphate. This is the penultimate step in the biosynthesis of riboflavin. The protein is 6,7-dimethyl-8-ribityllumazine synthase of Pelotomaculum thermopropionicum (strain DSM 13744 / JCM 10971 / SI).